The following is a 209-amino-acid chain: Uracil phosphoribosyltransferase (209 aa).

Residues Arg-79, Arg-104, and Asp-131–Ser-139 each bind 5-phospho-alpha-D-ribose 1-diphosphate. Uracil is bound by residues Ile-194 and Gly-199–Ala-201. Asp-200 contributes to the 5-phospho-alpha-D-ribose 1-diphosphate binding site.

The protein belongs to the UPRTase family. Mg(2+) serves as cofactor.

The catalysed reaction is UMP + diphosphate = 5-phospho-alpha-D-ribose 1-diphosphate + uracil. It functions in the pathway pyrimidine metabolism; UMP biosynthesis via salvage pathway; UMP from uracil: step 1/1. With respect to regulation, allosterically activated by GTP. Catalyzes the conversion of uracil and 5-phospho-alpha-D-ribose 1-diphosphate (PRPP) to UMP and diphosphate. In Streptococcus agalactiae serotype III (strain NEM316), this protein is Uracil phosphoribosyltransferase.